The primary structure comprises 591 residues: Metalloendopeptidase OPG085 (591 aa).

His-41 provides a ligand contact to Zn(2+). Glu-44 is an active-site residue. 2 residues coordinate Zn(2+): His-45 and Glu-112.

The protein belongs to the peptidase M44 family. Zn(2+) is required as a cofactor. Post-translationally, undergoes proteolytic processing during the course of infection. May be cleaved into 46 kDa and 22 kDa products (Potential).

Its subcellular location is the virion. Probably involved in maturation of some viral proteins by processing them preferentially at Ala-Gly-|-Ser/Thr/Lys motifs. Does not seem to be responsible for the cleavage of major core proteins. The chain is Metalloendopeptidase OPG085 (OPG085) from Homo sapiens (Human).